A 156-amino-acid polypeptide reads, in one-letter code: B3 domain-containing protein At5g26805 (156 aa).

The TF-B3 DNA-binding region spans 57 to 155 (KFQLPMEKIR…MFCFSVLDGR (99 aa)).

Its subcellular location is the nucleus. The chain is B3 domain-containing protein At5g26805 from Arabidopsis thaliana (Mouse-ear cress).